The sequence spans 258 residues: Short-chain dehydrogenase/reductase olcF (258 aa).

NADP(+) contacts are provided by Val-12, Asp-58, and Arg-120. Catalysis depends on Ser-138, which acts as the Proton donor. Residues Tyr-152, Lys-156, and Val-185 each contribute to the NADP(+) site. Catalysis depends on Tyr-152, which acts as the Proton acceptor. The active-site Lowers pKa of active site Tyr is Lys-156.

The protein belongs to the short-chain dehydrogenases/reductases (SDR) family.

The protein operates within secondary metabolite biosynthesis; terpenoid biosynthesis. Its function is as follows. Short-chain dehydrogenase/reductase; part of the gene cluster that mediates the biosynthesis of 15-deoxyoxalicine B. The first step of the pathway is the synthesis of nicotinyl-CoA from nicotinic acid by the nicotinic acid-CoA ligase olcI. Nicotinyl-CoA is then a substrate of polyketide synthase olcA to produce 4-hydroxy-6-(3-pyridinyl)-2H-pyran-2-one (HPPO) which is further prenylated by the polyprenyl transferase olcH to yield geranylgeranyl-HPPO. Geranylgeranyl pyrophosphate is provided by the cluster-specific geranylgeranyl pyrophosphate synthase olcC. The FAD-dependent monooxygenase olcE catalyzes the epoxidation of geranylgeranyl-HPPO and the terpene cyclase olcD catalyzes the cyclization of the terpenoid component, resulting in the formation of the tricyclic terpene moiety seen in predecaturin E. The cytochrome P450 monooxygenase then catalyzes the allylic oxidation of predecaturin E, which is followed by spirocylization with concomitant loss of one molecule of water to form decaturin E. Decaturin E is the substrate of the cytochrome P450 monooxygenase olcJ which hydroxylates it at the C-29 position to form decaturin F. The short-chain dehydrogenase/reductase olcF may catalyze the oxidation of decaturin F to generate the 29-hydroxyl-27-one intermediate, and subsequent hemiacetal formation probably leads to the formation of decaturin C. The dioxygenase olcK may be a peroxisomal enzyme that catalyzes the hydroxylation of decaturin C into decaturin A once decaturin C is shuttled into the peroxisome by the MFS transporter olcL. Finally the cytochrome P450 monooxygenase olcB catalyzes the oxidative rearrangement to yield 15-deoxyoxalicine B. In the absence of olcJ, decaturin E may be shunted to a pathway in which it is oxidized to a ketone, possibly by olcF, to form decaturin D, which undergoes further allylic oxidation to yield decaturin G. Moreover, in the absence of oclK or oclL, oclB can convert decaturin C into 15-deoxyoxalicine A. The chain is Short-chain dehydrogenase/reductase olcF from Penicillium canescens.